We begin with the raw amino-acid sequence, 448 residues long: tRNA-2-methylthio-N(6)-dimethylallyladenosine synthase (448 aa).

One can recognise an MTTase N-terminal domain in the interval 2–119 (KKLYIKTFGC…LSDLIAQRRK (118 aa)). [4Fe-4S] cluster contacts are provided by Cys11, Cys48, Cys82, Cys156, Cys160, and Cys163. The Radical SAM core domain occupies 142–375 (RQTRGSAYVS…LALIEGQSNQ (234 aa)). A TRAM domain is found at 378–444 (QKMLGKTERV…NYTLRGELVE (67 aa)).

This sequence belongs to the methylthiotransferase family. MiaB subfamily. In terms of assembly, monomer. [4Fe-4S] cluster is required as a cofactor.

The protein resides in the cytoplasm. It catalyses the reaction N(6)-dimethylallyladenosine(37) in tRNA + (sulfur carrier)-SH + AH2 + 2 S-adenosyl-L-methionine = 2-methylsulfanyl-N(6)-dimethylallyladenosine(37) in tRNA + (sulfur carrier)-H + 5'-deoxyadenosine + L-methionine + A + S-adenosyl-L-homocysteine + 2 H(+). Functionally, catalyzes the methylthiolation of N6-(dimethylallyl)adenosine (i(6)A), leading to the formation of 2-methylthio-N6-(dimethylallyl)adenosine (ms(2)i(6)A) at position 37 in tRNAs that read codons beginning with uridine. This Polynucleobacter asymbioticus (strain DSM 18221 / CIP 109841 / QLW-P1DMWA-1) (Polynucleobacter necessarius subsp. asymbioticus) protein is tRNA-2-methylthio-N(6)-dimethylallyladenosine synthase.